An 86-amino-acid polypeptide reads, in one-letter code: Acyl carrier protein (86 aa).

A Carrier domain is found at 2–82 (ATVFERVKKV…AVVDYLKSKG (81 aa)). The residue at position 37 (S37) is an O-(pantetheine 4'-phosphoryl)serine.

The protein belongs to the acyl carrier protein (ACP) family. 4'-phosphopantetheine is transferred from CoA to a specific serine of apo-ACP by AcpS. This modification is essential for activity because fatty acids are bound in thioester linkage to the sulfhydryl of the prosthetic group.

It is found in the cytoplasm. Its pathway is lipid metabolism; fatty acid biosynthesis. In terms of biological role, carrier of the growing fatty acid chain in fatty acid biosynthesis. This is Acyl carrier protein from Dehalococcoides mccartyi (strain ATCC BAA-2266 / KCTC 15142 / 195) (Dehalococcoides ethenogenes (strain 195)).